The chain runs to 365 residues: MTENHYLLLTPGPLTTTKTVKEVMLYDWCTWDVEYNTMVQKVRAKLVSLATKEEEKYTTVLMQGSGTFSVEAVIGSVIPKNGKLLVCTNGAYGKRIVQMAEMLHIDVVVSQTEEWEPTNIVEVEKILQQDKEITHIAVVHCETTTGIINPIVDVCKLGKQYGKVTLVDAMSSFGGIEIDIAELQIDFLISSANKCIQGVPGFGFVIAQRDELLKCKGQARSLSLDLYDQWETMENQNGKWRFTSPTHVVHAFYQALLELEKEGGVRARYNRYYNNQKLLVNRMGEIGFKPLVNEKYQSPIITSFIYPEGNFEFQQLYNELKRYGFVIYPGKISKVDTFRIGNIGDVHEEDINRLVDSIAKGVVIG.

Lysine 194 is subject to N6-(pyridoxal phosphate)lysine.

The protein belongs to the class-V pyridoxal-phosphate-dependent aminotransferase family. PhnW subfamily. Homodimer. Pyridoxal 5'-phosphate is required as a cofactor.

The catalysed reaction is (2-aminoethyl)phosphonate + pyruvate = phosphonoacetaldehyde + L-alanine. Its function is as follows. Involved in phosphonate degradation. In Bacillus thuringiensis subsp. konkukian (strain 97-27), this protein is 2-aminoethylphosphonate--pyruvate transaminase.